A 482-amino-acid polypeptide reads, in one-letter code: DnaJ protein P58IPK homolog (482 aa).

The N-terminal stretch at 1-42 (MDLFRVWSGMDFLAWRGMAYTLLLLNFVFACQLLLLQPLVSA) is a signal peptide. TPR repeat units lie at residues 50-83 (AAELFERASQSIKVKRYSDALDDLNAAIEADPAL), 85-117 (EAYFKRASVLRHFCRYEDSENSYQKYLEFKSGD), 130-164 (AKSALETASTLYESKDIAKALEFVDKVVLVFSPAC), 166-198 (KAKLLKVKLLMVSKDYSGAISETGYILKEDENN), 199-232 (LEALLLRGRAYYYLADHDIAQRHYQKGLRLDPEH), 245-278 (LLKKTKSAEDNANKGKLRVSAEEYKEAIALDPEH), 283-316 (VHLYLGLCKVSVRLGRGKDGLNSCNEALNIDAEL), and 318-350 (EALHQRGEAKLLLEDWEGAVEDLKQAAQNSQDM). The J domain occupies 370–436 (DWYKILGISR…DKRARFDRGE (67 aa)).

In terms of assembly, interacts with the helicase domain of the tobamovirus (TMV) and the tobacco etch virus (TEV) replicases. As to expression, expressed in flower buds and flowers.

Its subcellular location is the endoplasmic reticulum lumen. In terms of biological role, plays an important positive role in viral symptom development and is required for viral multiplication and pathogenesis. This Arabidopsis thaliana (Mouse-ear cress) protein is DnaJ protein P58IPK homolog (P58IPK).